A 244-amino-acid polypeptide reads, in one-letter code: High frequency lysogenization protein HflD homolog (244 aa).

It belongs to the HflD family.

The protein resides in the cytoplasm. It is found in the cell inner membrane. The chain is High frequency lysogenization protein HflD homolog from Acinetobacter baumannii (strain ATCC 17978 / DSM 105126 / CIP 53.77 / LMG 1025 / NCDC KC755 / 5377).